We begin with the raw amino-acid sequence, 303 residues long: Ribosomal RNA small subunit methyltransferase H (303 aa).

S-adenosyl-L-methionine is bound by residues 33–35, D52, F78, D99, and Q106; that span reads GGH.

It belongs to the methyltransferase superfamily. RsmH family.

The protein localises to the cytoplasm. The enzyme catalyses cytidine(1402) in 16S rRNA + S-adenosyl-L-methionine = N(4)-methylcytidine(1402) in 16S rRNA + S-adenosyl-L-homocysteine + H(+). Functionally, specifically methylates the N4 position of cytidine in position 1402 (C1402) of 16S rRNA. This Phytoplasma australiense protein is Ribosomal RNA small subunit methyltransferase H.